We begin with the raw amino-acid sequence, 552 residues long: 5'-AMP-activated protein kinase catalytic subunit alpha-2 (552 aa).

Positions 16 to 268 (YVLGDTLGVG…IKDIREHEWF (253 aa)) constitute a Protein kinase domain. Residues 22–30 (LGVGTFGKV) and Lys45 each bind ATP. Asp139 serves as the catalytic Proton acceptor. Thr172 is modified (phosphothreonine; by LKB1 and CaMKK2). Thr258 carries the post-translational modification Phosphothreonine. Residues 291-376 (EAVKEVCEKF…PERMPPLIAD (86 aa)) are AIS. Residue Ser377 is modified to Phosphoserine. The tract at residues 478–520 (EQRSGSSTPQRSCSAAGLHRPRSSVDSSTAENHSLSGSLTGSL) is disordered. Positions 480-490 (RSGSSTPQRSC) are enriched in polar residues. Ser491 is modified (phosphoserine). The segment covering 501–510 (SVDSSTAENH) has biased composition (polar residues). A compositionally biased stretch (low complexity) spans 511–520 (SLSGSLTGSL).

This sequence belongs to the protein kinase superfamily. CAMK Ser/Thr protein kinase family. SNF1 subfamily. As to quaternary structure, AMPK is a heterotrimer of an alpha catalytic subunit (PRKAA1 or PRKAA2), a beta (PRKAB1 or PRKAB2) and a gamma non-catalytic subunits (PRKAG1, PRKAG2 or PRKAG3). Interacts with FNIP1 and FNIP2. Associates with internalized INSR complexes on Golgi/endosomal membranes; PRKAA2/AMPK2 together with ATIC and HACD3/PTPLAD1 is proposed to be part of a signaling network regulating INSR autophosphorylation and endocytosis. Interacts with DUSP29. Interacts with ARF6. The phosphorylated form at Thr-172 mediated by CamKK2 interacts with ACSS2. Requires Mg(2+) as cofactor. Ubiquitinated. In terms of processing, phosphorylated at Thr-172 by STK11/LKB1 in complex with STE20-related adapter-alpha (STRADA) pseudo kinase and CAB39. Also phosphorylated at Thr-172 by CAMKK2; triggered by a rise in intracellular calcium ions, without detectable changes in the AMP/ATP ratio. CAMKK1 can also phosphorylate Thr-172, but at much lower level. Dephosphorylated by protein phosphatase 2A and 2C (PP2A and PP2C). Phosphorylated by ULK1; leading to negatively regulate AMPK activity and suggesting the existence of a regulatory feedback loop between ULK1 and AMPK. Dephosphorylated by PPM1A and PPM1B at Thr-172 (mediated by STK11/LKB1). As to expression, skeletal muscle, lower levels in liver, heart and kidney.

Its subcellular location is the cytoplasm. It is found in the nucleus. It carries out the reaction L-seryl-[protein] + ATP = O-phospho-L-seryl-[protein] + ADP + H(+). The catalysed reaction is L-threonyl-[protein] + ATP = O-phospho-L-threonyl-[protein] + ADP + H(+). It catalyses the reaction L-seryl-[acetyl-CoA carboxylase] + ATP = O-phospho-L-seryl-[acetyl-CoA carboxylase] + ADP + H(+). The enzyme catalyses L-seryl-[3-hydroxy-3-methylglutaryl-coenzyme A reductase] + ATP = O-phospho-L-seryl-[3-hydroxy-3-methylglutaryl-coenzyme A reductase] + ADP + H(+). Its activity is regulated as follows. Activated by phosphorylation on Thr-172. Binding of AMP to non-catalytic gamma subunit (PRKAG1, PRKAG2 or PRKAG3) results in allosteric activation, inducing phosphorylation on Thr-172. AMP-binding to gamma subunit also sustains activity by preventing dephosphorylation of Thr-172. ADP also stimulates Thr-172 phosphorylation, without stimulating already phosphorylated AMPK. ATP promotes dephosphorylation of Thr-172, rendering the enzyme inactive. Under physiological conditions AMPK mainly exists in its inactive form in complex with ATP, which is much more abundant than AMP. Selectively inhibited by compound C (6-[4-(2-Piperidin-1-yl-ethoxy)-phenyl)]-3-pyridin-4-yl-pyyrazolo[1,5-a] pyrimidine. Activated by resveratrol, a natural polyphenol present in red wine, and S17834, a synthetic polyphenol. Salicylate/aspirin directly activates kinase activity, primarily by inhibiting Thr-172 dephosphorylation. Catalytic subunit of AMP-activated protein kinase (AMPK), an energy sensor protein kinase that plays a key role in regulating cellular energy metabolism. In response to reduction of intracellular ATP levels, AMPK activates energy-producing pathways and inhibits energy-consuming processes: inhibits protein, carbohydrate and lipid biosynthesis, as well as cell growth and proliferation. AMPK acts via direct phosphorylation of metabolic enzymes, and by longer-term effects via phosphorylation of transcription regulators. Regulates lipid synthesis by phosphorylating and inactivating lipid metabolic enzymes such as ACACA, ACACB, GYS1, HMGCR and LIPE; regulates fatty acid and cholesterol synthesis by phosphorylating acetyl-CoA carboxylase (ACACA and ACACB) and hormone-sensitive lipase (LIPE) enzymes, respectively. Promotes lipolysis of lipid droplets by mediating phosphorylation of isoform 1 of CHKA (CHKalpha2). Regulates insulin-signaling and glycolysis by phosphorylating IRS1, PFKFB2 and PFKFB3. Involved in insulin receptor/INSR internalization. AMPK stimulates glucose uptake in muscle by increasing the translocation of the glucose transporter SLC2A4/GLUT4 to the plasma membrane, possibly by mediating phosphorylation of TBC1D4/AS160. Regulates transcription and chromatin structure by phosphorylating transcription regulators involved in energy metabolism such as CRTC2/TORC2, FOXO3, histone H2B, HDAC5, MEF2C, MLXIPL/ChREBP, EP300, HNF4A, p53/TP53, SREBF1, SREBF2 and PPARGC1A. Acts as a key regulator of glucose homeostasis in liver by phosphorylating CRTC2/TORC2, leading to CRTC2/TORC2 sequestration in the cytoplasm. In response to stress, phosphorylates 'Ser-36' of histone H2B (H2BS36ph), leading to promote transcription. Acts as a key regulator of cell growth and proliferation by phosphorylating FNIP1, TSC2, RPTOR, WDR24 and ATG1/ULK1: in response to nutrient limitation, negatively regulates the mTORC1 complex by phosphorylating RPTOR component of the mTORC1 complex and by phosphorylating and activating TSC2. Also phosphorylates and inhibits GATOR2 subunit WDR24 in response to nutrient limitation, leading to suppress glucose-mediated mTORC1 activation. In response to energetic stress, phosphorylates FNIP1, inactivating the non-canonical mTORC1 signaling, thereby promoting nuclear translocation of TFEB and TFE3, and inducing transcription of lysosomal or autophagy genes. In response to nutrient limitation, promotes autophagy by phosphorylating and activating ATG1/ULK1. In that process, it also activates WDR45/WIPI4. Phosphorylates CASP6, thereby preventing its autoprocessing and subsequent activation. AMPK also acts as a regulator of circadian rhythm by mediating phosphorylation of CRY1, leading to destabilize it. May regulate the Wnt signaling pathway by phosphorylating CTNNB1, leading to stabilize it. Also acts as a regulator of cellular polarity by remodeling the actin cytoskeleton; probably by indirectly activating myosin. Also phosphorylates CFTR, EEF2K, KLC1, NOS3 and SLC12A1. Plays an important role in the differential regulation of pro-autophagy (composed of PIK3C3, BECN1, PIK3R4 and UVRAG or ATG14) and non-autophagy (composed of PIK3C3, BECN1 and PIK3R4) complexes, in response to glucose starvation. Can inhibit the non-autophagy complex by phosphorylating PIK3C3 and can activate the pro-autophagy complex by phosphorylating BECN1. Upon glucose starvation, promotes ARF6 activation in a kinase-independent manner leading to cell migration. Upon glucose deprivation mediates the phosphorylation of ACSS2 at 'Ser-659', which exposes the nuclear localization signal of ACSS2, required for its interaction with KPNA1 and nuclear translocation. Upon stress, regulates mitochondrial fragmentation through phosphorylation of MTFR1L. The chain is 5'-AMP-activated protein kinase catalytic subunit alpha-2 (Prkaa2) from Rattus norvegicus (Rat).